A 154-amino-acid chain; its full sequence is Large ribosomal subunit protein uL13 (154 aa).

The protein belongs to the universal ribosomal protein uL13 family. As to quaternary structure, part of the 50S ribosomal subunit.

Functionally, this protein is one of the early assembly proteins of the 50S ribosomal subunit, although it is not seen to bind rRNA by itself. It is important during the early stages of 50S assembly. This chain is Large ribosomal subunit protein uL13, found in Cereibacter sphaeroides (strain ATCC 17029 / ATH 2.4.9) (Rhodobacter sphaeroides).